A 260-amino-acid chain; its full sequence is PHD finger protein ALFIN-LIKE 5 (260 aa).

Methionine 1 is modified (N-acetylmethionine). A disordered region spans residues 142 to 203 (AEKQTKEMPS…EEDEDEDEHG (62 aa)). Positions 148 to 165 (EMPSSANQNGNRSKSNSK) are enriched in polar residues. Residues 167–181 (RGLESKSSKTIHAKD) are compositionally biased toward basic and acidic residues. Positions 182 to 202 (EEEGLELEEGEEEEDEDEDEH) are enriched in acidic residues. The PHD-type zinc-finger motif lies at 204 to 256 (ETLCGACGDNYASDEFWICCDMCEKWFHGECVKITPARAEHIKHYKCPTCSNK).

This sequence belongs to the Alfin family. In terms of assembly, interacts with H3K4me3 and to a lesser extent with H3K4me2. Ubiquitously expressed.

The protein localises to the nucleus. In terms of biological role, histone-binding component that specifically recognizes H3 tails trimethylated on 'Lys-4' (H3K4me3), which mark transcription start sites of virtually all active genes. The polypeptide is PHD finger protein ALFIN-LIKE 5 (AL5) (Arabidopsis thaliana (Mouse-ear cress)).